We begin with the raw amino-acid sequence, 195 residues long: Toxin protein Tse4 (195 aa).

The next 4 helical transmembrane spans lie at 20 to 40 (ASGG…ITLL), 116 to 136 (YVEL…LFGL), 140 to 160 (LLAA…GASM), and 171 to 191 (ALLM…AAYL).

Its subcellular location is the host membrane. It is found in the secreted. Functionally, toxin secreted by the H1 type VI (H1-T6SS) secretion system into the periplasm of recipient cells. This chain is Toxin protein Tse4, found in Pseudomonas aeruginosa (strain ATCC 15692 / DSM 22644 / CIP 104116 / JCM 14847 / LMG 12228 / 1C / PRS 101 / PAO1).